A 95-amino-acid chain; its full sequence is Sec-independent protein translocase protein TatA (95 aa).

The chain crosses the membrane as a helical span at residues 1 to 21 (MFGRLGAPEIILILVVIILLF). The segment covering 44 to 55 (AKAMKSEAKADD) has biased composition (basic and acidic residues). The interval 44-95 (AKAMKSEAKADDAAPADPPNPEQSAAQRTIQAAPGDVTSSRPVTEPTDTTKR) is disordered.

Belongs to the TatA/E family. As to quaternary structure, the Tat system comprises two distinct complexes: a TatABC complex, containing multiple copies of TatA, TatB and TatC subunits, and a separate TatA complex, containing only TatA subunits. Substrates initially bind to the TatABC complex, which probably triggers association of the separate TatA complex to form the active translocon.

The protein localises to the cell membrane. Functionally, part of the twin-arginine translocation (Tat) system that transports large folded proteins containing a characteristic twin-arginine motif in their signal peptide across membranes. TatA could form the protein-conducting channel of the Tat system. This Streptomyces coelicolor (strain ATCC BAA-471 / A3(2) / M145) protein is Sec-independent protein translocase protein TatA.